Consider the following 539-residue polypeptide: Peptide chain release factor 3 (539 aa).

One can recognise a tr-type G domain in the interval 14 to 283 (EKRRNFAIIS…AFLEYALQPE (270 aa)). GTP contacts are provided by residues 23–30 (SHPDAGKT), 91–95 (DTPGH), and 145–148 (NKLD).

The protein belongs to the TRAFAC class translation factor GTPase superfamily. Classic translation factor GTPase family. PrfC subfamily.

The protein resides in the cytoplasm. Functionally, increases the formation of ribosomal termination complexes and stimulates activities of RF-1 and RF-2. It binds guanine nucleotides and has strong preference for UGA stop codons. It may interact directly with the ribosome. The stimulation of RF-1 and RF-2 is significantly reduced by GTP and GDP, but not by GMP. This is Peptide chain release factor 3 from Rippkaea orientalis (strain PCC 8801 / RF-1) (Cyanothece sp. (strain PCC 8801)).